The chain runs to 266 residues: Glucosamine-6-phosphate deaminase (266 aa).

Residue aspartate 72 is the Proton acceptor; for enolization step of the active site. The active-site For ring-opening step is the aspartate 141. Histidine 143 (proton acceptor; for ring-opening step) is an active-site residue. The For ring-opening step role is filled by glutamate 148.

The protein belongs to the glucosamine/galactosamine-6-phosphate isomerase family. NagB subfamily. As to quaternary structure, homohexamer.

The catalysed reaction is alpha-D-glucosamine 6-phosphate + H2O = beta-D-fructose 6-phosphate + NH4(+). Its pathway is amino-sugar metabolism; N-acetylneuraminate degradation; D-fructose 6-phosphate from N-acetylneuraminate: step 5/5. Its activity is regulated as follows. Allosterically activated by N-acetylglucosamine 6-phosphate (GlcNAc6P). Catalyzes the reversible isomerization-deamination of glucosamine 6-phosphate (GlcN6P) to form fructose 6-phosphate (Fru6P) and ammonium ion. This chain is Glucosamine-6-phosphate deaminase, found in Pectobacterium carotovorum subsp. carotovorum (strain PC1).